Consider the following 209-residue polypeptide: MGKVYVFDHPLIQHKLTYIRDKNTGTKEFRELVDEVATLMAFEITRDLPLEEVEIETPVSKARAKVIAGKKLGVIPILRAGIGMVDGILKLIPAAKVGHIGLYRDPQTLKPVEYYVKLPSDVEERDFIIVDPMLATGGSAVAAIDALKKRGAKSIKFMCLIAAPEGVKAVETAHPDVDIYIAALDERLNDHGYIVPGLGDAGDRLFGTK.

5-phospho-alpha-D-ribose 1-diphosphate contacts are provided by residues arginine 79, arginine 104, and 131–139; that span reads DPMLATGGS. Uracil-binding positions include isoleucine 194 and 199–201; that span reads GDA. Position 200 (aspartate 200) interacts with 5-phospho-alpha-D-ribose 1-diphosphate.

It belongs to the UPRTase family. Requires Mg(2+) as cofactor.

The enzyme catalyses UMP + diphosphate = 5-phospho-alpha-D-ribose 1-diphosphate + uracil. It participates in pyrimidine metabolism; UMP biosynthesis via salvage pathway; UMP from uracil: step 1/1. With respect to regulation, allosterically activated by GTP. Its function is as follows. Catalyzes the conversion of uracil and 5-phospho-alpha-D-ribose 1-diphosphate (PRPP) to UMP and diphosphate. This Geobacillus kaustophilus (strain HTA426) protein is Uracil phosphoribosyltransferase.